The following is a 66-amino-acid chain: KEGYLVDLHTGCKYTCVGLGDNDYCVRECRLRYYDSAHGYCYAFGCWCTHLYEQAVVWPLPNKRCK.

An LCN-type CS-alpha/beta domain is found at 1–66 (KEGYLVDLHT…VWPLPNKRCK (66 aa)). 4 disulfide bridges follow: Cys12–Cys65, Cys16–Cys41, Cys25–Cys46, and Cys29–Cys48.

It belongs to the long (4 C-C) scorpion toxin superfamily. Sodium channel inhibitor family. Beta subfamily. Expressed by the venom gland.

It localises to the secreted. Beta toxins bind voltage-independently at site-4 of sodium channels (Nav) and reduces peak current and shifts the voltage of activation toward more negative potentials thereby affecting sodium channel activation and promoting spontaneous and repetitive firing. Has an inhibitory effect on voltage-gated sodium channel hNav1.6/SCN8A, affecting both the activation and inactivation processes. Also reduces the peak current of hNav1.5/SCN5A but does not shift its voltage of activation. This toxin is active against mammals and lethal to mice. This Centruroides baergi (Scorpion) protein is Beta-toxin Cb2.